We begin with the raw amino-acid sequence, 61 residues long: Beta-defensin 13 (61 aa).

The N-terminal stretch at 1–21 (MRLLYLLFAAVMLLFLQAVPA) is a signal peptide. Residues S24, R40, H44, N51, N53, G54, H58, and K61 each coordinate a 1,2-diacyl-sn-glycero-3-phosphate. 3 cysteine pairs are disulfide-bonded: C31/C59, C38/C52, and C42/C60.

It belongs to the beta-defensin family. Monomeric. Forms multimeric, probably including tetrameric, complexes in the presence of phospholipid phosphatidic acid.

The protein resides in the secreted. In terms of biological role, exhibits antimicrobial activity against fungi. Antimicrobial activity in a pH-dependent manner against the yeast C.albicans; activity is salt tolerant and retains antifungal activity in NaCl concentrations of 100mM. Permeabilizes C.albicans cell membranes via targeting plasma membrane phospholipid phosphatidic acid. This Crocodylus porosus (Saltwater crocodile) protein is Beta-defensin 13.